Here is a 350-residue protein sequence, read N- to C-terminus: Protein-glutamate methylesterase/protein-glutamine glutaminase 1 (350 aa).

In terms of domain architecture, Response regulatory spans 6-123 (RVLVVDDSAL…GRSVENYAEE (118 aa)). Residue Asp57 is modified to 4-aspartylphosphate. One can recognise a CheB-type methylesterase domain in the interval 159–350 (LGASGKIIFV…ARRVLGAVSA (192 aa)). Residues Ser171, His197, and Asp293 contribute to the active site.

This sequence belongs to the CheB family. In terms of processing, phosphorylated by CheA. Phosphorylation of the N-terminal regulatory domain activates the methylesterase activity.

The protein localises to the cytoplasm. It carries out the reaction [protein]-L-glutamate 5-O-methyl ester + H2O = L-glutamyl-[protein] + methanol + H(+). The catalysed reaction is L-glutaminyl-[protein] + H2O = L-glutamyl-[protein] + NH4(+). In terms of biological role, involved in chemotaxis. Part of a chemotaxis signal transduction system that modulates chemotaxis in response to various stimuli. Catalyzes the demethylation of specific methylglutamate residues introduced into the chemoreceptors (methyl-accepting chemotaxis proteins or MCP) by CheR. Also mediates the irreversible deamidation of specific glutamine residues to glutamic acid. The polypeptide is Protein-glutamate methylesterase/protein-glutamine glutaminase 1 (Dechloromonas aromatica (strain RCB)).